Consider the following 790-residue polypeptide: DNA topoisomerase 1 (790 aa).

Composition is skewed to polar residues over residues Met-1–Met-18, Lys-44–Ser-54, and Ser-61–Thr-70. The segment at Met-1–Val-196 is disordered. Positions Gln-158–Pro-167 are enriched in acidic residues. Over residues Ser-168 to Ser-181 the composition is skewed to polar residues. Interaction with DNA stretches follow at residues Lys-426–Tyr-427, Arg-490–Lys-495, and Thr-581–Lys-583. The 358-residue stretch at Ser-433–Phe-790 folds into the Topo IB-type catalytic domain. Catalysis depends on Tyr-749, which acts as the O-(3'-phospho-DNA)-tyrosine intermediate.

The protein belongs to the type IB topoisomerase family.

Its subcellular location is the nucleus. It catalyses the reaction ATP-independent breakage of single-stranded DNA, followed by passage and rejoining.. Functionally, releases the supercoiling and torsional tension of DNA introduced during the DNA replication and transcription by transiently cleaving and rejoining one strand of the DNA duplex. Introduces a single-strand break via transesterification at a target site in duplex DNA. The scissile phosphodiester is attacked by the catalytic tyrosine of the enzyme, resulting in the formation of a DNA-(3'-phosphotyrosyl)-enzyme intermediate and the expulsion of a 5'-OH DNA strand. The free DNA strand then rotates around the intact phosphodiester bond on the opposing strand, thus removing DNA supercoils. Finally, in the religation step, the DNA 5'-OH attacks the covalent intermediate to expel the active-site tyrosine and restore the DNA phosphodiester backbone. The protein is DNA topoisomerase 1 (TOP1) of Daucus carota (Wild carrot).